Here is a 715-residue protein sequence, read N- to C-terminus: MPAESGKRFKPSKYVPVSAAAIFLVGATTLFFAFTCPGLSLNVSPAVPIYNAIMFLFVLANFSMATFMDPGIFPRAEEDEDKEDDFRAPLYKTVEIKGIQVRMKWCATCRFYRPPRCSHCSVCDNCVEEFDHHCPWVNNCIGRRNYRYFFLFLLSLTAHIMGVFGFGLLYVLYHIEELSGVRTAVTMAVMCVAGLFFIPVAGLTGFHVVLVARGRTTNEQVTGKFRGGVNPFTNGCCNNVSRVLCSSPAPRYLGRPKKEKTIVIRPPFLRPEVSDGQITVKIMDNGIQGELRRTKSKGSLEITESQSADAEPPPPPKPDLSRYTGLRTHLSLATNEDSSLLGKDSPPTPTMYKYRPGYSSSSTSAAMPHSSSAKLSRGDSLKEPTSIADSSRHPSYRSEPSLEPESFRSPTFGKSFHFDPLSSGSRSSSLKSAQGTGFELGQLQSIRSEGTTSTSYKSLANQTRNGSLSYDSLLTPSDSPDFESVQAGPEPDPPLGYTSPFLSARLAQQREAERHPRLLPTGPPHREPSPVRYDNLSRHIVASLQEREKLLRQSPPLAGREEEPGLGDSGIQSTPGSGHAPRTSSSSDDSKRSPLSKTPLGRPAVPRFGKPDGLRSRGLGSPEPGTTAPYLGRSISYSSQKAPSGVSETEEVALQPLLTPKDEVQLKTTYSKSNGQPKSIGSASPGPGQPPLSSPTRGGVKKVSGVGGTTYEISV.

Residues 1–13 are Cytoplasmic-facing; sequence MPAESGKRFKPSK. The chain crosses the membrane as a helical span at residues 14-34; it reads YVPVSAAAIFLVGATTLFFAF. At 35-52 the chain is on the extracellular side; that stretch reads TCPGLSLNVSPAVPIYNA. Residues 53–73 form a helical membrane-spanning segment; it reads IMFLFVLANFSMATFMDPGIF. At 74–148 the chain is on the cytoplasmic side; sequence PRAEEDEDKE…NCIGRRNYRY (75 aa). The residue at position 91 (tyrosine 91) is a Phosphotyrosine. Positions 104–154 constitute a DHHC domain; it reads KWCATCRFYRPPRCSHCSVCDNCVEEFDHHCPWVNNCIGRRNYRYFFLFLL. Catalysis depends on cysteine 134, which acts as the S-palmitoyl cysteine intermediate. A helical membrane pass occupies residues 149-169; that stretch reads FFLFLLSLTAHIMGVFGFGLL. The Extracellular segment spans residues 170-191; the sequence is YVLYHIEELSGVRTAVTMAVMC. The chain crosses the membrane as a helical span at residues 192-212; it reads VAGLFFIPVAGLTGFHVVLVA. The Cytoplasmic segment spans residues 213–715; the sequence is RGRTTNEQVT…VGGTTYEISV (503 aa). Serine 247 is subject to Phosphoserine. A disordered region spans residues 289–715; the sequence is GELRRTKSKG…VGGTTYEISV (427 aa). Residue threonine 294 is modified to Phosphothreonine. A phosphoserine mark is found at serine 296 and serine 299. A Phosphothreonine modification is found at threonine 303. Serine 345 is modified (phosphoserine). Residues threonine 348 and threonine 350 each carry the phosphothreonine modification. The span at 359 to 373 shows a compositional bias: low complexity; it reads SSSSTSAAMPHSSSA. Residues serine 380, serine 398, serine 406, and serine 409 each carry the phosphoserine modification. At threonine 411 the chain carries Phosphothreonine. A phosphoserine mark is found at serine 415, serine 425, serine 429, and serine 432. A compositionally biased stretch (low complexity) spans 422 to 432; it reads SSGSRSSSLKS. Threonine 436 carries the post-translational modification Phosphothreonine. Over residues 442–478 the composition is skewed to polar residues; the sequence is QLQSIRSEGTTSTSYKSLANQTRNGSLSYDSLLTPSD. Serine 529 and serine 554 each carry phosphoserine. Residues 581-597 show a composition bias toward low complexity; that stretch reads PRTSSSSDDSKRSPLSK. At arginine 617 the chain carries Omega-N-methylarginine. A Phosphoserine modification is found at serine 621. A Phosphothreonine modification is found at threonine 659. A compositionally biased stretch (polar residues) spans 666 to 677; it reads LKTTYSKSNGQP. 2 positions are modified to phosphoserine: serine 684 and serine 694. At arginine 697 the chain carries Omega-N-methylarginine.

Belongs to the DHHC palmitoyltransferase family. ERF2/ZDHHC9 subfamily. Phosphorylation regulates association with endocytic proteins and its subcellular localization. Phosphorylation by LYN during fatty acid uptake leads to inactivation of the activity. Post-translationally, autopalmitoylated. Palmitoylation of the C-terminal tail regulates stimulation-dependent plasma membrane motility. As to expression, highly enriched in brain, detectable in liver and heart, and undetectable in most other tissues.

It localises to the cell membrane. The catalysed reaction is L-cysteinyl-[protein] + hexadecanoyl-CoA = S-hexadecanoyl-L-cysteinyl-[protein] + CoA. Functionally, palmitoyltransferase that catalyzes the addition of palmitate onto various protein substrates such as CTNND2, CD36, GSDMD, NLRP3, NOD1, NOD2, STAT3 and S1PR1 thus plays a role in various biological processes including cell adhesion, inflammation, fatty acid uptake, bacterial sensing or cardiac functions. Plays an important role in the regulation of synapse efficacy by mediating palmitoylation of delta-catenin/CTNND2, thereby increasing synaptic delivery and surface stabilization of alpha-amino-3-hydroxy-5-methyl-4-isoxazole propionic acid receptors (AMPARs). Under basal conditions, remains at the synaptic membrane through FYN-mediated phosphorylation that prevents association with endocytic proteins. Neuronal activity enhances the internalization and trafficking of DHHC5 from spines to dendritic shafts where it palmitoylates delta-catenin/CTNND2. Regulates cell adhesion at the plasma membrane by palmitoylating GOLGA7B and DSG2. Plays a role in innate immune response by mediating the palmitoylation of NOD1 and NOD2 and their proper recruitment to the bacterial entry site and phagosomes. Also participates in fatty acid uptake by palmitoylating CD36 and thereby targeting it to the plasma membrane. Upon binding of fatty acids to CD36, gets phosphorylated by LYN leading to inactivation and subsequent CD36 caveolar endocytosis. Controls oligodendrocyte development by catalyzing STAT3 palmitoylation. Acts as a regulator of inflammatory response by mediating palmitoylation of NLRP3 and GSDMD. Palmitoylates NLRP3 to promote inflammasome assembly and activation. Activates pyroptosis by catalyzing palmitoylation of gasdermin-D (GSDMD), thereby promoting membrane translocation and pore formation of GSDMD. This Mus musculus (Mouse) protein is Palmitoyltransferase ZDHHC5 (Zdhhc5).